The primary structure comprises 90 residues: Signal recognition particle 19 kDa protein (90 aa).

Belongs to the SRP19 family. In terms of assembly, part of the signal recognition particle protein translocation system, which is composed of SRP and FtsY. Archaeal SRP consists of a 7S RNA molecule of 300 nucleotides and two protein subunits: SRP54 and SRP19.

The protein localises to the cytoplasm. In terms of biological role, involved in targeting and insertion of nascent membrane proteins into the cytoplasmic membrane. Binds directly to 7S RNA and mediates binding of the 54 kDa subunit of the SRP. This chain is Signal recognition particle 19 kDa protein, found in Methanococcus aeolicus (strain ATCC BAA-1280 / DSM 17508 / OCM 812 / Nankai-3).